Consider the following 707-residue polypeptide: Ribosomal RNA large subunit methyltransferase K/L (707 aa).

The region spanning 44–155 is the THUMP domain; the sequence is VIYNLCLWSR…NDILTVSFDL (112 aa).

Belongs to the methyltransferase superfamily. RlmKL family.

It is found in the cytoplasm. It catalyses the reaction guanosine(2445) in 23S rRNA + S-adenosyl-L-methionine = N(2)-methylguanosine(2445) in 23S rRNA + S-adenosyl-L-homocysteine + H(+). It carries out the reaction guanosine(2069) in 23S rRNA + S-adenosyl-L-methionine = N(2)-methylguanosine(2069) in 23S rRNA + S-adenosyl-L-homocysteine + H(+). In terms of biological role, specifically methylates the guanine in position 2445 (m2G2445) and the guanine in position 2069 (m7G2069) of 23S rRNA. This chain is Ribosomal RNA large subunit methyltransferase K/L, found in Legionella pneumophila subsp. pneumophila (strain Philadelphia 1 / ATCC 33152 / DSM 7513).